We begin with the raw amino-acid sequence, 602 residues long: Elongation factor 4 (602 aa).

The region spanning 8 to 189 (KNIRNFSIIA…KIITTIPAPS (182 aa)) is the tr-type G domain. Residues 20–25 (DHGKST) and 136–139 (NKID) each bind GTP.

This sequence belongs to the TRAFAC class translation factor GTPase superfamily. Classic translation factor GTPase family. LepA subfamily.

It is found in the cell inner membrane. It catalyses the reaction GTP + H2O = GDP + phosphate + H(+). Functionally, required for accurate and efficient protein synthesis under certain stress conditions. May act as a fidelity factor of the translation reaction, by catalyzing a one-codon backward translocation of tRNAs on improperly translocated ribosomes. Back-translocation proceeds from a post-translocation (POST) complex to a pre-translocation (PRE) complex, thus giving elongation factor G a second chance to translocate the tRNAs correctly. Binds to ribosomes in a GTP-dependent manner. In Helicobacter pylori (strain ATCC 700392 / 26695) (Campylobacter pylori), this protein is Elongation factor 4.